Reading from the N-terminus, the 472-residue chain is Arginine biosynthesis bifunctional protein ArgJ, mitochondrial (472 aa).

Substrate contacts are provided by Thr-200, Lys-229, Thr-240, Glu-327, Asn-467, and Thr-472. Catalysis depends on Thr-240, which acts as the Nucleophile.

It belongs to the ArgJ family. Heterodimer of an alpha and a beta chain. The alpha and beta chains are autoproteolytically processed from a single precursor protein within the mitochondrion.

The protein resides in the mitochondrion matrix. The enzyme catalyses N(2)-acetyl-L-ornithine + L-glutamate = N-acetyl-L-glutamate + L-ornithine. It catalyses the reaction L-glutamate + acetyl-CoA = N-acetyl-L-glutamate + CoA + H(+). The protein operates within amino-acid biosynthesis; L-arginine biosynthesis; L-ornithine and N-acetyl-L-glutamate from L-glutamate and N(2)-acetyl-L-ornithine (cyclic): step 1/1. Its pathway is amino-acid biosynthesis; L-arginine biosynthesis; N(2)-acetyl-L-ornithine from L-glutamate: step 1/4. In terms of biological role, catalyzes two activities which are involved in the cyclic version of arginine biosynthesis: the synthesis of acetylglutamate from glutamate and acetyl-CoA, and of ornithine by transacetylation between acetylornithine and glutamate. The protein is Arginine biosynthesis bifunctional protein ArgJ, mitochondrial of Talaromyces marneffei (strain ATCC 18224 / CBS 334.59 / QM 7333) (Penicillium marneffei).